A 486-amino-acid chain; its full sequence is Cysteine--tRNA ligase (486 aa).

Zn(2+) is bound at residue cysteine 29. Residues 31-41 (ITVYDYCHLGH) carry the 'HIGH' region motif. Zn(2+) is bound by residues cysteine 215, histidine 240, and glutamate 244. The 'KMSKS' region signature appears at 272–276 (KMSKS). Lysine 275 provides a ligand contact to ATP.

It belongs to the class-I aminoacyl-tRNA synthetase family. As to quaternary structure, monomer. Zn(2+) is required as a cofactor.

It is found in the cytoplasm. The catalysed reaction is tRNA(Cys) + L-cysteine + ATP = L-cysteinyl-tRNA(Cys) + AMP + diphosphate. This chain is Cysteine--tRNA ligase, found in Gloeothece citriformis (strain PCC 7424) (Cyanothece sp. (strain PCC 7424)).